Here is a 1195-residue protein sequence, read N- to C-terminus: Error-prone DNA polymerase (1195 aa).

A disordered region spans residues 1163-1195; sequence ALNGDRRDTPDAPAQRHRHPRDVRILPPSRDFH.

The protein belongs to the DNA polymerase type-C family. DnaE2 subfamily.

It is found in the cytoplasm. It catalyses the reaction DNA(n) + a 2'-deoxyribonucleoside 5'-triphosphate = DNA(n+1) + diphosphate. Functionally, DNA polymerase involved in damage-induced mutagenesis and translesion synthesis (TLS). It is not the major replicative DNA polymerase. The protein is Error-prone DNA polymerase of Rhodopseudomonas palustris (strain ATCC BAA-98 / CGA009).